We begin with the raw amino-acid sequence, 415 residues long: Lipid II:glycine glycyltransferase (415 aa).

The protein belongs to the FemABX family.

It localises to the cytoplasm. The catalysed reaction is beta-D-GlcNAc-(1-&gt;4)-Mur2Ac(oyl-L-Ala-D-isoglutaminyl-L-Lys-D-Ala-D-Ala)-di-trans,octa-cis-undecaprenyl diphosphate + glycyl-tRNA(Gly) = beta-D-GlcNAc-(1-&gt;4)-Mur2Ac(oyl-L-Ala-D-isoglutaminyl-L-Lys-(N(6)-Gly)-D-Ala-D-Ala)-di-trans,octa-cis-undecaprenyl diphosphate + tRNA(Gly) + H(+). Catalyzes the incorporation of amino acid(s) into the interchain peptide bridge of peptidoglycan, using aminoacyl-tRNA as amino acid donor. The polypeptide is Lipid II:glycine glycyltransferase (femX) (Staphylococcus saprophyticus subsp. saprophyticus (strain ATCC 15305 / DSM 20229 / NCIMB 8711 / NCTC 7292 / S-41)).